The following is a 456-amino-acid chain: Serine/threonine-protein kinase PBS1 (456 aa).

Residues M1–R57 form a disordered region. A lipid anchor (N-myristoyl glycine) is attached at G2. 2 S-palmitoyl cysteine lipidation sites follow: C3 and C6. A compositionally biased stretch (basic and acidic residues) spans D12–H23. S21 carries the post-translational modification Phosphoserine. Over residues K27 to G39 the composition is skewed to polar residues. Residues F86–L363 form the Protein kinase domain. Residues L92 to V100 and K115 each bind ATP. Position 160 is a phosphotyrosine (Y160). The active-site Proton acceptor is D213. Phosphoserine occurs at positions 217 and 247. Residues T248 and T253 each carry the phosphothreonine modification. Y261 carries the phosphotyrosine modification. The short motif at S292–H296 is the Recognition motif required for RPS5-mediated plant resistance to P.syringae element. A disordered region spans residues Y368 to G456. 2 stretches are compositionally biased toward basic and acidic residues: residues P370 to D392 and F400 to A429. Residues E446–G456 show a composition bias toward polar residues.

This sequence belongs to the protein kinase superfamily. Ser/Thr protein kinase family. In terms of assembly, in infected plant cells, it interacts with the P.syringae virulence protein avrPphB. In uninfected plants, autophosphorylated form interacts with RPS5. Interacts with FLS2. Post-translationally, cleaved by avrPphB in infected plant cells. Its cleavage serves as a signal that triggers the RPS5-mediated defense system. Autophosphorylates. Autophosphorylation may be required to trigger the RPS5-mediated plant defense system. In terms of processing, palmitoylation at Cys-3 and Cys-6 are required for plasma membrane location that is essential for the RPS5-mediated plant defense response.

The protein localises to the cell membrane. The catalysed reaction is L-seryl-[protein] + ATP = O-phospho-L-seryl-[protein] + ADP + H(+). It carries out the reaction L-threonyl-[protein] + ATP = O-phospho-L-threonyl-[protein] + ADP + H(+). In terms of biological role, protein kinase required for plant defense mechanism mediated by the disease resistance (R) protein RPS5. In case of infection by Pseudomonas syringae, AvrPphB triggers RPS5-mediated defense mechanism via the cleavage of PBS1. Both kinase activity and cleavage by avrPphB are independently required to trigger the RPS5-mediated resistance. Contributes to PAMP-triggered immunity (PTI) signaling and defense responses downstream of FLS2. In Arabidopsis thaliana (Mouse-ear cress), this protein is Serine/threonine-protein kinase PBS1.